A 350-amino-acid polypeptide reads, in one-letter code: Biotin synthase (350 aa).

A Radical SAM core domain is found at 38–256 (NYVQVSTLLS…IAIARIMMPQ (219 aa)). Residues C53, C57, and C60 each coordinate [4Fe-4S] cluster. [2Fe-2S] cluster-binding residues include C97, C128, C188, and R260.

It belongs to the radical SAM superfamily. Biotin synthase family. Homodimer. [4Fe-4S] cluster is required as a cofactor. [2Fe-2S] cluster serves as cofactor.

It catalyses the reaction (4R,5S)-dethiobiotin + (sulfur carrier)-SH + 2 reduced [2Fe-2S]-[ferredoxin] + 2 S-adenosyl-L-methionine = (sulfur carrier)-H + biotin + 2 5'-deoxyadenosine + 2 L-methionine + 2 oxidized [2Fe-2S]-[ferredoxin]. The protein operates within cofactor biosynthesis; biotin biosynthesis; biotin from 7,8-diaminononanoate: step 2/2. Catalyzes the conversion of dethiobiotin (DTB) to biotin by the insertion of a sulfur atom into dethiobiotin via a radical-based mechanism. This is Biotin synthase from Vibrio campbellii (strain ATCC BAA-1116).